A 425-amino-acid chain; its full sequence is Ribonuclease T2-like (425 aa).

Positions 1–18 are cleaved as a signal peptide; the sequence is MLLNKGLLASLLAYTTTA. Cystine bridges form between C32-C51, C40-C99, C50-C175, C107-C167, and C245-C281. The N-linked (GlcNAc...) asparagine glycan is linked to N42. Residue H92 is part of the active site. N-linked (GlcNAc...) asparagine glycosylation occurs at N134. Residues E160 and H164 contribute to the active site.

This sequence belongs to the RNase T2 family.

It is found in the vacuole lumen. Its subcellular location is the cytoplasm. The enzyme catalyses a ribonucleotidyl-ribonucleotide-RNA + H2O = a 3'-end 3'-phospho-ribonucleotide-RNA + a 5'-end dephospho-ribonucleoside-RNA + H(+). In terms of biological role, rnase which modulates cell survival under stress conditions. Released from the vacuole to the cytoplasm during stress to promote tRNA and rRNA cleavage and to activate separately a downstream pathway that promotes cell death. Involved in cell size, vacuolar morphology and growth at high temperatures and high salt concentration. The chain is Ribonuclease T2-like (RNY1) from Kluyveromyces lactis (strain ATCC 8585 / CBS 2359 / DSM 70799 / NBRC 1267 / NRRL Y-1140 / WM37) (Yeast).